Here is an 82-residue protein sequence, read N- to C-terminus: Putative membrane protein insertion efficiency factor (82 aa).

Belongs to the UPF0161 family.

The protein resides in the cell inner membrane. Could be involved in insertion of integral membrane proteins into the membrane. The chain is Putative membrane protein insertion efficiency factor from Rickettsia peacockii (strain Rustic).